Consider the following 203-residue polypeptide: DNA-directed RNA polymerase subunit gamma (203 aa).

Zn(2+)-binding residues include Cys-34, Cys-36, Cys-49, and Cys-52.

Belongs to the RNA polymerase beta' chain family. RpoC1 subfamily. In cyanobacteria the RNAP catalytic core is composed of 2 alpha, 1 beta, 1 beta', 1 gamma and 1 omega subunit. When a sigma factor is associated with the core the holoenzyme is formed, which can initiate transcription. Zn(2+) is required as a cofactor.

The catalysed reaction is RNA(n) + a ribonucleoside 5'-triphosphate = RNA(n+1) + diphosphate. Its function is as follows. DNA-dependent RNA polymerase catalyzes the transcription of DNA into RNA using the four ribonucleoside triphosphates as substrates. This Fischerella muscicola protein is DNA-directed RNA polymerase subunit gamma (rpoC1).